A 457-amino-acid polypeptide reads, in one-letter code: Carboxypeptidase N catalytic chain (457 aa).

The first 23 residues, 1 to 23, serve as a signal peptide directing secretion; that stretch reads MPDLPSAFLPLLLLSKFVTPVTF. One can recognise a Peptidase M14 domain in the interval 24–338; the sequence is RHHRYDDLVR…EALIQFLEQV (315 aa). C42 and C104 are oxidised to a cystine. Zn(2+) contacts are provided by H86, E89, and H216. C271 and C311 are oxidised to a cystine. The active-site Proton donor/acceptor is the E308. O-linked (GalNAc...) threonine glycosylation is found at T400, T402, and T409. Residues 418–457 are disordered; that stretch reads SSSQVYPVQRAPGRGQGGRAKQPRTSRKKDPATKRHRGPA.

This sequence belongs to the peptidase M14 family. Tetramer of two catalytic chains and two glycosylated inactive chains. Zn(2+) serves as cofactor. As to expression, mainly expressed in liver. Also detected in lung, stomach, intestine, spleen and kidney.

The protein localises to the secreted. Its subcellular location is the extracellular space. It carries out the reaction Release of a C-terminal basic amino acid, preferentially lysine.. Protects the body from potent vasoactive and inflammatory peptides containing C-terminal Arg or Lys (such as kinins or anaphylatoxins) which are released into the circulation. In Mus musculus (Mouse), this protein is Carboxypeptidase N catalytic chain (Cpn1).